The following is a 575-amino-acid chain: 5-aminolevulinate synthase, mitochondrial (575 aa).

The transit peptide at 1-55 (MESITRVSMSVCPFVKSSSAQALRQLSKNSALTSQARQCPFMGAALNAKESTRSY) directs the protein to the mitochondrion. Positions 124, 237, and 256 each coordinate substrate. Pyridoxal 5'-phosphate contacts are provided by Ser-289, His-317, and Thr-361. Residue Lys-364 is part of the active site. An N6-(pyridoxal phosphate)lysine modification is found at Lys-364. Residues Thr-393 and Thr-394 each contribute to the pyridoxal 5'-phosphate site. Thr-479 serves as a coordination point for substrate.

It belongs to the class-II pyridoxal-phosphate-dependent aminotransferase family. In terms of assembly, homodimer. The cofactor is pyridoxal 5'-phosphate.

The protein localises to the mitochondrion matrix. The catalysed reaction is succinyl-CoA + glycine + H(+) = 5-aminolevulinate + CO2 + CoA. Its pathway is porphyrin-containing compound metabolism; protoporphyrin-IX biosynthesis; 5-aminolevulinate from glycine: step 1/1. Catalyzes the synthesis of 5-aminolevulinate (ALA) from succinyl-CoA and glycine, the first and rate-limiting step in heme biosynthesis. This Debaryomyces hansenii (strain ATCC 36239 / CBS 767 / BCRC 21394 / JCM 1990 / NBRC 0083 / IGC 2968) (Yeast) protein is 5-aminolevulinate synthase, mitochondrial (HEM1).